A 487-amino-acid polypeptide reads, in one-letter code: L-asparagine permease 2 (487 aa).

Helical transmembrane passes span 26-46 (QLQM…GAGG), 50-70 (SAGP…FLIL), 98-118 (VAFV…IVDT), 133-153 (PIPQ…MNLI), 163-183 (FWAS…GTVF), 214-234 (IVLV…VGIA), 256-276 (IACF…YTAY), 290-310 (IGID…ALSS), 341-361 (TGVP…GIIL), 369-389 (AFEI…ATIV), 414-434 (SPFS…LMYF), and 440-460 (PWMI…WYLV).

Belongs to the amino acid-polyamine-organocation (APC) superfamily. Amino acid transporter (AAT) (TC 2.A.3.1) family.

Its subcellular location is the cell membrane. In terms of biological role, dual function in both nitrogen assimilation and in protection against acid stress during infection. Involved in asparagine uptake. This Mycobacterium bovis (strain ATCC BAA-935 / AF2122/97) protein is L-asparagine permease 2 (ansP2).